A 937-amino-acid polypeptide reads, in one-letter code: Putative leucine-rich repeat receptor-like serine/threonine-protein kinase At3g53590 (937 aa).

A signal peptide spans 1-20 (MIPPNINVLIRSICINLVTS). The Extracellular portion of the chain corresponds to 21 to 547 (LPLNFAYIFI…LLAQTSGIRT (527 aa)). Asn-50, Asn-63, Asn-90, and Asn-114 each carry an N-linked (GlcNAc...) asparagine glycan. 8 LRR repeats span residues 102 to 126 (LLYLEILDVMWNNLTGRIPLEIGRI), 127 to 150 (SSLKLLLLNGNKFTGSLPPELGNL), 152 to 173 (NLNRLQVDENNITGSVPFSFGN), 174 to 198 (LRSIKHLHLNNNTISGEIPVELSKL), 200 to 222 (KLVHMILDNNNLTGTLPLELAQL), 223 to 249 (PSLTILQLDNNNFEGSTIPEAYGHFSR), 251 to 270 (VKLSLRNCGLQGSIPDLSRI), and 271 to 294 (ENLSYLDLSWNHLTGTIPESKLSD). N-linked (GlcNAc...) asparagine glycosylation is found at Asn-162, Asn-184, and Asn-210. N-linked (GlcNAc...) asparagine glycosylation is found at Asn-272 and Asn-295. 3 LRR repeats span residues 296 to 316 (MTTIELSYNHLTGSIPQSFSD), 317 to 341 (LNSLQLLSLENNSLSGSVPTEIWQD), and 343 to 360 (SFENNKLQVYDLNNNFSD). N-linked (GlcNAc...) asparagine glycans are attached at residues Asn-327, Asn-357, Asn-370, Asn-413, Asn-499, and Asn-516. The chain crosses the membrane as a helical span at residues 548 to 568 (IVWMMIVAGSVVAATVLSVTA). Residues 569–937 (TLLYVRKRRE…SGFFHAVKPR (369 aa)) are Cytoplasmic-facing. The region spanning 614–886 (FDSSTLIGRG…SKVVKELEGI (273 aa)) is the Protein kinase domain. ATP is bound by residues 620–628 (IGRGSYGKV) and Lys-642. The active-site Proton acceptor is Asp-738.

This sequence belongs to the protein kinase superfamily. Ser/Thr protein kinase family.

It localises to the cell membrane. It carries out the reaction L-seryl-[protein] + ATP = O-phospho-L-seryl-[protein] + ADP + H(+). It catalyses the reaction L-threonyl-[protein] + ATP = O-phospho-L-threonyl-[protein] + ADP + H(+). The protein is Putative leucine-rich repeat receptor-like serine/threonine-protein kinase At3g53590 of Arabidopsis thaliana (Mouse-ear cress).